Reading from the N-terminus, the 243-residue chain is Biosynthetic peptidoglycan transglycosylase (243 aa).

The chain crosses the membrane as a helical span at residues 21–43; that stretch reads LLIVSLVSALMSVLQVIVFRFVD.

The protein belongs to the glycosyltransferase 51 family.

Its subcellular location is the cell inner membrane. The catalysed reaction is [GlcNAc-(1-&gt;4)-Mur2Ac(oyl-L-Ala-gamma-D-Glu-L-Lys-D-Ala-D-Ala)](n)-di-trans,octa-cis-undecaprenyl diphosphate + beta-D-GlcNAc-(1-&gt;4)-Mur2Ac(oyl-L-Ala-gamma-D-Glu-L-Lys-D-Ala-D-Ala)-di-trans,octa-cis-undecaprenyl diphosphate = [GlcNAc-(1-&gt;4)-Mur2Ac(oyl-L-Ala-gamma-D-Glu-L-Lys-D-Ala-D-Ala)](n+1)-di-trans,octa-cis-undecaprenyl diphosphate + di-trans,octa-cis-undecaprenyl diphosphate + H(+). It participates in cell wall biogenesis; peptidoglycan biosynthesis. Peptidoglycan polymerase that catalyzes glycan chain elongation from lipid-linked precursors. The protein is Biosynthetic peptidoglycan transglycosylase of Xylella fastidiosa (strain M12).